Here is a 179-residue protein sequence, read N- to C-terminus: UPF0303 protein YBR137W (179 aa).

It belongs to the UPF0303 family.

The protein resides in the cytoplasm. This Saccharomyces cerevisiae (strain ATCC 204508 / S288c) (Baker's yeast) protein is UPF0303 protein YBR137W.